Here is a 307-residue protein sequence, read N- to C-terminus: N-acetylneuraminate lyase (307 aa).

Aceneuramate-binding residues include Thr51 and Thr52. Tyr143 serves as the catalytic Proton donor. Lys173 (schiff-base intermediate with substrate) is an active-site residue. Residues Ser175, Gly199, Asp201, Glu202, and Ser218 each coordinate aceneuramate.

This sequence belongs to the DapA family. NanA subfamily. In terms of assembly, homotetramer.

The protein resides in the cytoplasm. It catalyses the reaction aceneuramate = aldehydo-N-acetyl-D-mannosamine + pyruvate. Its pathway is amino-sugar metabolism; N-acetylneuraminate degradation. In terms of biological role, catalyzes the cleavage of N-acetylneuraminic acid (sialic acid) to form pyruvate and N-acetylmannosamine via a Schiff base intermediate. It prevents sialic acids from being recycled and returning to the cell surface. Involved in the N-glycolylneuraminic acid (Neu5Gc) degradation pathway. The chain is N-acetylneuraminate lyase from Danio rerio (Zebrafish).